A 244-amino-acid chain; its full sequence is 23S rRNA (guanosine-2'-O-)-methyltransferase RlmB (244 aa).

S-adenosyl-L-methionine contacts are provided by Gly-196, Ile-216, and Leu-225.

It belongs to the class IV-like SAM-binding methyltransferase superfamily. RNA methyltransferase TrmH family. RlmB subfamily. Homodimer.

The protein localises to the cytoplasm. It catalyses the reaction guanosine(2251) in 23S rRNA + S-adenosyl-L-methionine = 2'-O-methylguanosine(2251) in 23S rRNA + S-adenosyl-L-homocysteine + H(+). In terms of biological role, specifically methylates the ribose of guanosine 2251 in 23S rRNA. In Pectobacterium atrosepticum (strain SCRI 1043 / ATCC BAA-672) (Erwinia carotovora subsp. atroseptica), this protein is 23S rRNA (guanosine-2'-O-)-methyltransferase RlmB.